Consider the following 557-residue polypeptide: NADH-quinone oxidoreductase subunit C/D (557 aa).

The span at M1–E13 shows a compositional bias: acidic residues. The interval M1–R20 is disordered. Positions M1–L174 are NADH dehydrogenase I subunit C. Residues N184–R557 form an NADH dehydrogenase I subunit D region. K517 participates in a covalent cross-link: Glycyl lysine isopeptide (Lys-Gly) (interchain with G-Cter in SAMP2).

It in the N-terminal section; belongs to the complex I 30 kDa subunit family. This sequence in the C-terminal section; belongs to the complex I 49 kDa subunit family. In terms of assembly, NDH-1 is composed of 13 different subunits. Subunits NuoB, CD, E, F, and G constitute the peripheral sector of the complex.

It is found in the cell membrane. It carries out the reaction a quinone + NADH + 5 H(+)(in) = a quinol + NAD(+) + 4 H(+)(out). In terms of biological role, NDH-1 shuttles electrons from NADH, via FMN and iron-sulfur (Fe-S) centers, to quinones in the respiratory chain. Couples the redox reaction to proton translocation (for every two electrons transferred, four hydrogen ions are translocated across the cytoplasmic membrane), and thus conserves the redox energy in a proton gradient. In Haloferax volcanii (strain ATCC 29605 / DSM 3757 / JCM 8879 / NBRC 14742 / NCIMB 2012 / VKM B-1768 / DS2) (Halobacterium volcanii), this protein is NADH-quinone oxidoreductase subunit C/D (nuoCD).